Here is an 85-residue protein sequence, read N- to C-terminus: U4-theraphotoxin-Hhn1a (85 aa).

A signal peptide spans 1–22 (MKMTLIAILTCAAVLVLHTTAA). Residues 23 to 48 (EELEAESQLMEVGMPDTELEAVDEER) constitute a propeptide that is removed on maturation. 3 disulfides stabilise this stretch: Cys52–Cys66, Cys56–Cys77, and Cys71–Cys82.

This sequence belongs to the neurotoxin 12 (Hwtx-2) family. 02 (Hwtx-2) subfamily. As to quaternary structure, monomer. In terms of tissue distribution, expressed by the venom gland.

Its subcellular location is the secreted. Its function is as follows. Neurotoxin active on both insects and mammals. In Cyriopagopus hainanus (Chinese bird spider), this protein is U4-theraphotoxin-Hhn1a.